We begin with the raw amino-acid sequence, 113 residues long: ATP synthase epsilon chain (113 aa).

It belongs to the ATPase epsilon chain family. As to quaternary structure, F-type ATPases have 2 components, CF(1) - the catalytic core - and CF(0) - the membrane proton channel. CF(1) has five subunits: alpha(3), beta(3), gamma(1), delta(1), epsilon(1). CF(0) has three main subunits: a, b and c.

It localises to the cell membrane. In terms of biological role, produces ATP from ADP in the presence of a proton gradient across the membrane. The chain is ATP synthase epsilon chain from Wolbachia pipientis subsp. Culex pipiens (strain wPip).